The sequence spans 876 residues: Valine--tRNA ligase (876 aa).

The short motif at 44-54 is the 'HIGH' region element; it reads PNVTGKLHLGH. The short motif at 520–524 is the 'KMSKS' region element; it reads KMSKS. K523 serves as a coordination point for ATP. Positions 805-876 form a coiled coil; that stretch reads LEGLIDMDKE…VKARIEQLKA (72 aa).

It belongs to the class-I aminoacyl-tRNA synthetase family. ValS type 1 subfamily. In terms of assembly, monomer.

It localises to the cytoplasm. It carries out the reaction tRNA(Val) + L-valine + ATP = L-valyl-tRNA(Val) + AMP + diphosphate. Functionally, catalyzes the attachment of valine to tRNA(Val). As ValRS can inadvertently accommodate and process structurally similar amino acids such as threonine, to avoid such errors, it has a 'posttransfer' editing activity that hydrolyzes mischarged Thr-tRNA(Val) in a tRNA-dependent manner. This Staphylococcus carnosus (strain TM300) protein is Valine--tRNA ligase.